A 146-amino-acid polypeptide reads, in one-letter code: Large ribosomal subunit protein uL15 (146 aa).

A disordered region spans residues 1-51 (MKLHELKPAKGSRKVRNRVGRGTSSGNGKTSGRGQKGQKARSGGGVRLGFE). Residues 10 to 19 (KGSRKVRNRV) show a composition bias toward basic residues. Composition is skewed to gly residues over residues 23-35 (TSSG…GRGQ) and 42-51 (SGGGVRLGFE).

It belongs to the universal ribosomal protein uL15 family. As to quaternary structure, part of the 50S ribosomal subunit.

Functionally, binds to the 23S rRNA. The chain is Large ribosomal subunit protein uL15 from Streptococcus equi subsp. equi (strain 4047).